A 330-amino-acid polypeptide reads, in one-letter code: Reaction center protein M chain (330 aa).

Helical transmembrane passes span glycine 57 to glycine 83, glycine 115 to lysine 144, and lysine 147 to glycine 172. (7R,8Z)-bacteriochlorophyll b contacts are provided by histidine 185 and histidine 205. A helical membrane pass occupies residues asparagine 202 to threonine 230. Positions 222 and 237 each coordinate Fe cation. Tryptophan 255 lines the a ubiquinone pocket. A helical membrane pass occupies residues threonine 264–threonine 290. Fe cation is bound at residue histidine 269.

Belongs to the reaction center PufL/M/PsbA/D family. As to quaternary structure, reaction center is composed of four bacteriochlorophylls, two bacteriopheophytins, two ubiquinones, one iron, and two highly hydrophobic polypeptide chains (designated L and M).

The protein resides in the cellular chromatophore membrane. The reaction center is a membrane-bound complex that mediates the initial photochemical event in the electron transfer process of photosynthesis. The protein is Reaction center protein M chain (pufM) of Roseobacter denitrificans (strain ATCC 33942 / OCh 114) (Erythrobacter sp. (strain OCh 114)).